The chain runs to 109 residues: Death-associated protein-like 1 homolog (109 aa).

2 disordered regions span residues 1 to 51 (MVQL…KPRS) and 76 to 100 (FPET…ISRI). Positions 31 to 50 (KSADENANVEKETRKTDKPR) are enriched in basic and acidic residues.

The protein belongs to the DAP-DAPL1 family. Associates with ribosomes; preventing translation. Interacts with eiF5a (eif5a and eif5a2); preventing translation.

Functionally, ribosome-binding protein that promotes ribosome hibernation, a process during which ribosomes are stabilized in an inactive state and preserved from proteasomal degradation. Acts via its association with eiF5a (eif5a and eif5a2) at the polypeptide exit tunnel of the ribosome, preventing mRNA translation. Plays a key role in ribosome hibernation in the mature egg by preventing mRNA translation, leading to ribosome inactivation. Ribosomes, which are produced in large quantities during oogenesis, are stored and translationally repressed in the egg and early embryo. The protein is Death-associated protein-like 1 homolog of Danio rerio (Zebrafish).